We begin with the raw amino-acid sequence, 183 residues long: A-type ATP synthase subunit E (183 aa).

It belongs to the V-ATPase E subunit family. Has multiple subunits, A(3), B(3), C, D, E, F, G, I and K(x); there may be a few other subunits as well.

The protein resides in the cell membrane. In terms of biological role, component of the A-type ATP synthase that produces ATP from ADP in the presence of a proton gradient across the membrane. In Methanosarcina mazei (strain ATCC BAA-159 / DSM 3647 / Goe1 / Go1 / JCM 11833 / OCM 88) (Methanosarcina frisia), this protein is A-type ATP synthase subunit E.